Reading from the N-terminus, the 399-residue chain is Enoyl-[acyl-carrier-protein] reductase [NADH] (399 aa).

Residues 48 to 53 (GASTGY), 74 to 75 (FE), 111 to 112 (DA), and 139 to 140 (LA) contribute to the NAD(+) site. Tyr225 serves as a coordination point for substrate. Tyr235 serves as the catalytic Proton donor. NAD(+) is bound by residues Lys244 and 274 to 276 (VVT).

Belongs to the TER reductase family. Monomer.

It catalyses the reaction a 2,3-saturated acyl-[ACP] + NAD(+) = a (2E)-enoyl-[ACP] + NADH + H(+). It functions in the pathway lipid metabolism; fatty acid biosynthesis. In terms of biological role, involved in the final reduction of the elongation cycle of fatty acid synthesis (FAS II). Catalyzes the reduction of a carbon-carbon double bond in an enoyl moiety that is covalently linked to an acyl carrier protein (ACP). The polypeptide is Enoyl-[acyl-carrier-protein] reductase [NADH] (Yersinia pseudotuberculosis serotype O:1b (strain IP 31758)).